Here is a 374-residue protein sequence, read N- to C-terminus: MEYKLINTDGRARRGRLTFDRGSVETPAFMPVGTYGTVKGMTPEEVDATGAEILLGNTFHLWLRPGQKVIKAHGDLHDFMNWKGPILTDSGGFQVFSLGKMRKIKEEGVYFRSPINGSEVFLSPEISMDIQYDLGSDIVMIFDECTPYPATEEETDVSMQLSLRWAQRSRDRFDEQQNPNALFGIIQGGCFEQFRDISLDGLTNIGFDGYAIGGLAVGEPKEDMYRILEYIAPKIPEDKPRYLMGVGKPEDLVEGVRRGIDMFDCVMPTRNARNGHLFTTDGVIKIRNAKHREDATTLDSECDCYTCKNYTRAYLYHLDKCGEILGARLNTIHNLSYYQRLMKGLREAIEQGKLEDFVDTFYQRIGKEKPMLDV.

Catalysis depends on aspartate 89, which acts as the Proton acceptor. Substrate is bound by residues 89–93 (DSGGF), aspartate 143, glutamine 187, and glycine 214. The interval 245 to 251 (GVGKPED) is RNA binding. Aspartate 264 serves as the catalytic Nucleophile. The RNA binding; important for wobble base 34 recognition stretch occupies residues 269–273 (TRNAR). Zn(2+) contacts are provided by cysteine 302, cysteine 304, cysteine 307, and histidine 333.

Belongs to the queuine tRNA-ribosyltransferase family. Homodimer. Within each dimer, one monomer is responsible for RNA recognition and catalysis, while the other monomer binds to the replacement base PreQ1. Requires Zn(2+) as cofactor.

It catalyses the reaction 7-aminomethyl-7-carbaguanine + guanosine(34) in tRNA = 7-aminomethyl-7-carbaguanosine(34) in tRNA + guanine. The protein operates within tRNA modification; tRNA-queuosine biosynthesis. Its function is as follows. Catalyzes the base-exchange of a guanine (G) residue with the queuine precursor 7-aminomethyl-7-deazaguanine (PreQ1) at position 34 (anticodon wobble position) in tRNAs with GU(N) anticodons (tRNA-Asp, -Asn, -His and -Tyr). Catalysis occurs through a double-displacement mechanism. The nucleophile active site attacks the C1' of nucleotide 34 to detach the guanine base from the RNA, forming a covalent enzyme-RNA intermediate. The proton acceptor active site deprotonates the incoming PreQ1, allowing a nucleophilic attack on the C1' of the ribose to form the product. After dissociation, two additional enzymatic reactions on the tRNA convert PreQ1 to queuine (Q), resulting in the hypermodified nucleoside queuosine (7-(((4,5-cis-dihydroxy-2-cyclopenten-1-yl)amino)methyl)-7-deazaguanosine). The chain is Queuine tRNA-ribosyltransferase from Psychromonas ingrahamii (strain DSM 17664 / CCUG 51855 / 37).